A 351-amino-acid chain; its full sequence is Histidine-rich glycoprotein (351 aa).

The N-terminal stretch at 1-23 (MFTSLKKVATFSFLVWISQYSGS) is a signal peptide. A propeptide spanning residues 24 to 47 (NSCSSSLVKHIPQTGSNLTFDRVL) is cleaved from the precursor. Asn-40 carries N-linked (GlcNAc...) asparagine glycosylation. The segment covering 57 to 91 (LHEEHHHHHPEEHHEPHHEEHHHHHPEEHHEPHHE) has biased composition (basic and acidic residues). The tract at residues 57-351 (LHEEHHHHHP…DAHHHHHHHH (295 aa)) is disordered. 6 consecutive repeat copies span residues 59–74 (EEHHHHHPEEHHEPHH), 75–90 (EEHHHHHPEEHHEPHH), 91–107 (EEHHHHHPHPHHHHHHH), 108–123 (PPHHHHHLGHHHHHHH), 124–138 (AAHHHHHEEHHHHHH), and 139–153 (AAHHHHHEEHHHHHH). The tract at residues 59–90 (EEHHHHHPEEHHEPHHEEHHHHHPEEHHEPHH) is 2 X 16 AA tandem repeats. The 2 X 17 AA tandem repeats stretch occupies residues 91 to 123 (EEHHHHHPHPHHHHHHHPPHHHHHLGHHHHHHH). A compositionally biased stretch (basic residues) spans 92 to 351 (EHHHHHPHPH…DAHHHHHHHH (260 aa)). The tract at residues 124–153 (AAHHHHHEEHHHHHHAAHHHHHEEHHHHHH) is 2 X 15 AA tandem repeats. Positions 173 to 351 (APHHHHHHHH…DAHHHHHHHH (179 aa)) are 18 X 10 AA tandem repeats.

This chain is Histidine-rich glycoprotein, found in Plasmodium lophurae.